The following is a 1062-amino-acid chain: Exportin-T (1062 aa).

This sequence belongs to the exportin family.

Its subcellular location is the nucleus. The protein resides in the cytoplasm. TRNA nucleus export receptor which facilitates tRNA translocation across the nuclear pore complex. Involved in pre-tRNA splicing, probably by affecting the interaction of pre-tRNA with splicing endonuclease. The protein is Exportin-T (LOS1) of Vanderwaltozyma polyspora (strain ATCC 22028 / DSM 70294 / BCRC 21397 / CBS 2163 / NBRC 10782 / NRRL Y-8283 / UCD 57-17) (Kluyveromyces polysporus).